Here is a 203-residue protein sequence, read N- to C-terminus: ADP-ribosylation factor-like protein 6-interacting protein 1 (203 aa).

Residues 1–41 (MAEGDNRSSNLLAVETASLEEQLQGWGEVMLMADKVLRWER) lie on the Cytoplasmic side of the membrane. A helical transmembrane segment spans residues 42–62 (AWFPPAIMGVVSLLFLIIYYL). Residues 63 to 65 (DPS) lie on the Lumenal side of the membrane. A helical membrane pass occupies residues 66–86 (VLSGVSCFVMFLCLADYLVPI). Over 87 to 133 (LAPRIFGSNKWTTEQQQRFHEICSNLVKTRRRAVGWWKRLFSLKEEK) the chain is Cytoplasmic. The helical transmembrane segment at 134 to 175 (PKMYFMTMIISLAAVAWVGQQVHNLLLTYLIVTFVLLLPGLN) threads the bilayer. Topologically, residues 176–203 (QHGIILKYIGMAKREINKLLKQKEKKNE) are lumenal.

The protein belongs to the ARL6ip family. Homooligomer. Heterodimer with ARL6IP5. Interacts with ARL6. Interacts with TMEM33. Interacts with ATL1. Expressed in the cerebral cortex, cerebellum, hippocampus, olfactory bulbs, medulla oblongate and limbic system (at protein level). Ubiquitous. Expressed in all hematopoietic cell lineages, with highest levels in early myeloid progenitor cells.

It localises to the endomembrane system. It is found in the endoplasmic reticulum membrane. Its subcellular location is the endoplasmic reticulum. Positively regulates SLC1A1/EAAC1-mediated glutamate transport by increasing its affinity for glutamate in a PKC activity-dependent manner. Promotes the catalytic efficiency of SLC1A1/EAAC1 probably by reducing its interaction with ARL6IP5, a negative regulator of SLC1A1/EAAC1-mediated glutamate transport. Plays a role in the formation and stabilization of endoplasmic reticulum tubules. Negatively regulates apoptosis, possibly by modulating the activity of caspase-9 (CASP9). Inhibits cleavage of CASP9-dependent substrates and downstream markers of apoptosis but not CASP9 itself. May be involved in protein transport, membrane trafficking, or cell signaling during hematopoietic maturation. This chain is ADP-ribosylation factor-like protein 6-interacting protein 1 (Arl6ip1), found in Mus musculus (Mouse).